Here is a 186-residue protein sequence, read N- to C-terminus: Pyridoxal 5'-phosphate synthase subunit PdxT (186 aa).

G47–S49 is a binding site for L-glutamine. C76 serves as the catalytic Nucleophile. Residues R102 and I130 to R131 contribute to the L-glutamine site. Catalysis depends on charge relay system residues H166 and E168.

Belongs to the glutaminase PdxT/SNO family. In the presence of PdxS, forms a dodecamer of heterodimers. Only shows activity in the heterodimer.

The catalysed reaction is aldehydo-D-ribose 5-phosphate + D-glyceraldehyde 3-phosphate + L-glutamine = pyridoxal 5'-phosphate + L-glutamate + phosphate + 3 H2O + H(+). It carries out the reaction L-glutamine + H2O = L-glutamate + NH4(+). Its pathway is cofactor biosynthesis; pyridoxal 5'-phosphate biosynthesis. In terms of biological role, catalyzes the hydrolysis of glutamine to glutamate and ammonia as part of the biosynthesis of pyridoxal 5'-phosphate. The resulting ammonia molecule is channeled to the active site of PdxS. The chain is Pyridoxal 5'-phosphate synthase subunit PdxT from Staphylococcus epidermidis (strain ATCC 35984 / DSM 28319 / BCRC 17069 / CCUG 31568 / BM 3577 / RP62A).